We begin with the raw amino-acid sequence, 173 residues long: Translation initiation factor IF-3 (173 aa).

The protein belongs to the IF-3 family. In terms of assembly, monomer.

It is found in the cytoplasm. IF-3 binds to the 30S ribosomal subunit and shifts the equilibrium between 70S ribosomes and their 50S and 30S subunits in favor of the free subunits, thus enhancing the availability of 30S subunits on which protein synthesis initiation begins. The sequence is that of Translation initiation factor IF-3 from Clostridium tetani (strain Massachusetts / E88).